The chain runs to 361 residues: Chorismate synthase (361 aa).

NADP(+) is bound by residues Arg-48 and Arg-54. Residues 125–127 (RSS), 238–239 (NA), Gly-278, 293–297 (KPTSS), and Arg-319 contribute to the FMN site.

Belongs to the chorismate synthase family. As to quaternary structure, homotetramer. It depends on FMNH2 as a cofactor.

It carries out the reaction 5-O-(1-carboxyvinyl)-3-phosphoshikimate = chorismate + phosphate. It participates in metabolic intermediate biosynthesis; chorismate biosynthesis; chorismate from D-erythrose 4-phosphate and phosphoenolpyruvate: step 7/7. Catalyzes the anti-1,4-elimination of the C-3 phosphate and the C-6 proR hydrogen from 5-enolpyruvylshikimate-3-phosphate (EPSP) to yield chorismate, which is the branch point compound that serves as the starting substrate for the three terminal pathways of aromatic amino acid biosynthesis. This reaction introduces a second double bond into the aromatic ring system. In Pectobacterium carotovorum subsp. carotovorum (strain PC1), this protein is Chorismate synthase.